Reading from the N-terminus, the 333-residue chain is UDP-3-O-acylglucosamine N-acyltransferase (333 aa).

Catalysis depends on His-225, which acts as the Proton acceptor.

This sequence belongs to the transferase hexapeptide repeat family. LpxD subfamily. Homotrimer.

The enzyme catalyses a UDP-3-O-[(3R)-3-hydroxyacyl]-alpha-D-glucosamine + a (3R)-hydroxyacyl-[ACP] = a UDP-2-N,3-O-bis[(3R)-3-hydroxyacyl]-alpha-D-glucosamine + holo-[ACP] + H(+). It participates in bacterial outer membrane biogenesis; LPS lipid A biosynthesis. In terms of biological role, catalyzes the N-acylation of UDP-3-O-acylglucosamine using 3-hydroxyacyl-ACP as the acyl donor. Is involved in the biosynthesis of lipid A, a phosphorylated glycolipid that anchors the lipopolysaccharide to the outer membrane of the cell. In Paracidovorax citrulli (strain AAC00-1) (Acidovorax citrulli), this protein is UDP-3-O-acylglucosamine N-acyltransferase.